The sequence spans 315 residues: Methionyl-tRNA formyltransferase (315 aa).

S110–P113 lines the (6S)-5,6,7,8-tetrahydrofolate pocket.

It belongs to the Fmt family.

The catalysed reaction is L-methionyl-tRNA(fMet) + (6R)-10-formyltetrahydrofolate = N-formyl-L-methionyl-tRNA(fMet) + (6S)-5,6,7,8-tetrahydrofolate + H(+). Its function is as follows. Attaches a formyl group to the free amino group of methionyl-tRNA(fMet). The formyl group appears to play a dual role in the initiator identity of N-formylmethionyl-tRNA by promoting its recognition by IF2 and preventing the misappropriation of this tRNA by the elongation apparatus. This Cutibacterium acnes (strain DSM 16379 / KPA171202) (Propionibacterium acnes) protein is Methionyl-tRNA formyltransferase.